Consider the following 436-residue polypeptide: Xylose isomerase (436 aa).

Mg(2+) is bound by residues Asp306 and Asp308.

Belongs to the xylose isomerase family. In terms of assembly, homotetramer. It depends on Mg(2+) as a cofactor.

The protein resides in the cytoplasm. It carries out the reaction alpha-D-xylose = alpha-D-xylulofuranose. This Sinorhizobium fredii (strain NBRC 101917 / NGR234) protein is Xylose isomerase.